The sequence spans 754 residues: Lysophospholipase 3 (754 aa).

Residues 1-19 (MKVNLKLIIGSILISQAQA) form the signal peptide. Low complexity-rich tracts occupy residues 25–40 (SSGSSSSSDSSPSETG) and 50–88 (LFGSGSSLTQSSSAQASSTKSTSDSASSTDSSLFSSSNS). The interval 25–88 (SSGSSSSSDS…DSSLFSSSNS (64 aa)) is disordered. Asparagine 112, asparagine 156, asparagine 174, asparagine 317, asparagine 325, asparagine 354, asparagine 391, asparagine 423, asparagine 470, asparagine 510, asparagine 515, asparagine 560, asparagine 577, asparagine 597, asparagine 625, and asparagine 631 each carry an N-linked (GlcNAc...) asparagine glycan. One can recognise a PLA2c domain in the interval 114-670 (TCPSKKTFIR…QEYCWTGGFK (557 aa)). Positions 687 to 721 (KTHTSGGTSSTTQQTSTTTGSSANGGSSSTGSSSS) are enriched in low complexity. The segment at 687–727 (KTHTSGGTSSTTQQTSTTTGSSANGGSSSTGSSSSSKKKNG) is disordered.

The protein belongs to the lysophospholipase family.

It is found in the secreted. It catalyses the reaction a 1-acyl-sn-glycero-3-phosphocholine + H2O = sn-glycerol 3-phosphocholine + a fatty acid + H(+). Catalyzes the release of fatty acids from lysophospholipids. Phospholipase B may well contribute to pathogenicity by abetting the fungus in damaging and traversing host cell membranes, processes which likely increase the rapidity of disseminated infection. The polypeptide is Lysophospholipase 3 (PLB3) (Candida albicans (Yeast)).